Here is a 208-residue protein sequence, read N- to C-terminus: V-type proton ATPase subunit E (208 aa).

This sequence belongs to the V-ATPase E subunit family.

In terms of biological role, produces ATP from ADP in the presence of a proton gradient across the membrane. This Chlamydia trachomatis serovar L2 (strain ATCC VR-902B / DSM 19102 / 434/Bu) protein is V-type proton ATPase subunit E.